The following is a 106-amino-acid chain: Prothymosin alpha-B (106 aa).

The span at 1 to 39 (MADAKVDSATEISAKDLKEKKLIEEKENGKDATNGKENE) shows a compositional bias: basic and acidic residues. The segment at 1-106 (MADAKVDSAT…DVDPKKQKVN (106 aa)) is disordered. At S8 the chain carries Phosphoserine. T10 is subject to Phosphothreonine. 2 stretches are compositionally biased toward acidic residues: residues 40-76 (ENGE…DEDL) and 85-98 (DDDE…EDDV).

Belongs to the pro/parathymosin family. In terms of tissue distribution, uniformly expressed in all embryonic cells at 4 and 8 hpf. At the 20-somite stage (18 hpf), ubiquitously expressed in the developing nervous system, in the tail bud and in the pronephric ducts. Also expressed in some placodes, including the anterior lateral line placode, otic vesicle and olfactory placode. At 27 hpf, strong expression persists in the central nervous system and the olfactory placode. Expressed strongly in the eyes and the pectoral fin buds. In the tail region, expressed in the spinal cord, in the posterior lateral line precursors, and persists in the pronephric ducts. At 48 hpf, expressed in all head territories including the developing brain, eyes, and pharyngeal arches. More caudally, expression persists in the pectoral fin buds, the spinal cord and, for the first time, appears in the intestine. At 72 hpf, expressed only in restricted regions of the brain, in pharyngeal arches region and in the amacrine cells and the horizontal cells of the retina.

Its subcellular location is the nucleus. This Danio rerio (Zebrafish) protein is Prothymosin alpha-B.